Consider the following 267-residue polypeptide: uncharacterized protein (267 aa).

The protein belongs to the glycosyltransferase 2 family.

This is an uncharacterized protein from Haemophilus influenzae (strain ATCC 51907 / DSM 11121 / KW20 / Rd).